The primary structure comprises 345 residues: Dihydroorotase (345 aa).

His13 and His15 together coordinate Zn(2+). Residues 15–17 (HLR) and Asn41 contribute to the substrate site. Residues Lys100, His137, and His175 each coordinate Zn(2+). The residue at position 100 (Lys100) is an N6-carboxylysine. Position 137 (His137) interacts with substrate. Residue Leu220 participates in substrate binding. Asp248 contributes to the Zn(2+) binding site. Asp248 is a catalytic residue. 2 residues coordinate substrate: His252 and Ala264.

Belongs to the metallo-dependent hydrolases superfamily. DHOase family. Class II DHOase subfamily. Homodimer. It depends on Zn(2+) as a cofactor.

It catalyses the reaction (S)-dihydroorotate + H2O = N-carbamoyl-L-aspartate + H(+). It functions in the pathway pyrimidine metabolism; UMP biosynthesis via de novo pathway; (S)-dihydroorotate from bicarbonate: step 3/3. Functionally, catalyzes the reversible cyclization of carbamoyl aspartate to dihydroorotate. The polypeptide is Dihydroorotase (Laribacter hongkongensis (strain HLHK9)).